Here is a 249-residue protein sequence, read N- to C-terminus: Tumor necrosis factor receptor superfamily member 13B (249 aa).

Topologically, residues 1–128 (MAMAFCPKDQ…LSSDQLTLYC (128 aa)) are extracellular. TNFR-Cys repeat units follow at residues 5–38 (FCPK…TDFC) and 42–76 (NCRK…AHFC). Disulfide bonds link Cys-6-Cys-19, Cys-22-Cys-34, Cys-26-Cys-38, Cys-43-Cys-58, Cys-61-Cys-72, and Cys-65-Cys-76. Residues 86 to 116 (LQPELGRPQAGEVEVRSDNSGRHQGSEHGPG) are disordered. The segment covering 98-111 (VEVRSDNSGRHQGS) has biased composition (basic and acidic residues). Residues 129–149 (TLGVCLCAIFCCFLVALASFL) traverse the membrane as a helical; Signal-anchor for type III membrane protein segment. Residues 150-249 (RRRGEPLPSQ…ASTGDARPAT (100 aa)) lie on the Cytoplasmic side of the membrane. The disordered stretch occupies residues 156 to 176 (LPSQPAGPRGSQANSPHAHRP).

Binds TRAF2, TRAF5 and TRAF6. Binds the NH2-terminal domain of CAMLG with its C-terminus.

It is found in the membrane. Functionally, receptor for TNFSF13/APRIL and TNFSF13B/TALL1/BAFF/BLYS that binds both ligands with similar high affinity. Mediates calcineurin-dependent activation of NF-AT, as well as activation of NF-kappa-B and AP-1. Involved in the stimulation of B- and T-cell function and the regulation of humoral immunity. In Mus musculus (Mouse), this protein is Tumor necrosis factor receptor superfamily member 13B (Tnfrsf13b).